Reading from the N-terminus, the 520-residue chain is Cytochrome P450 72A397 (520 aa).

Residues 14–34 traverse the membrane as a helical segment; it reads AVAVAVVVVGWAWKVLNWVWV. Residue Cys468 coordinates heme.

It belongs to the cytochrome P450 family. It depends on heme as a cofactor.

The protein localises to the membrane. The enzyme catalyses oleanolate + reduced [NADPH--hemoprotein reductase] + O2 = hederagenin + oxidized [NADPH--hemoprotein reductase] + H2O + H(+). Functionally, catalyzes the oxidation of oleanolate at the C-23 position to form hederagenin. The sequence is that of Cytochrome P450 72A397 from Kalopanax septemlobus (Castor aralia).